Here is a 139-residue protein sequence, read N- to C-terminus: Putative pre-16S rRNA nuclease (139 aa).

Belongs to the YqgF nuclease family.

The protein localises to the cytoplasm. Its function is as follows. Could be a nuclease involved in processing of the 5'-end of pre-16S rRNA. The sequence is that of Putative pre-16S rRNA nuclease from Legionella pneumophila (strain Lens).